A 159-amino-acid chain; its full sequence is Transcriptional repressor NrdR (159 aa).

A zinc finger lies at 3–34; the sequence is CPFCRHEDTQVVDSRVSEDGAAIRRRRRCSAC. The region spanning 49–139 is the ATP-cone domain; that stretch reads PAVVKKDGSR…VYRRFEDVSE (91 aa).

This sequence belongs to the NrdR family. Requires Zn(2+) as cofactor.

Functionally, negatively regulates transcription of bacterial ribonucleotide reductase nrd genes and operons by binding to NrdR-boxes. The protein is Transcriptional repressor NrdR of Burkholderia multivorans (strain ATCC 17616 / 249).